Reading from the N-terminus, the 174-residue chain is ATP-dependent protease subunit HslV (174 aa).

The active site involves threonine 2. Na(+) contacts are provided by glycine 157, cysteine 160, and threonine 163.

The protein belongs to the peptidase T1B family. HslV subfamily. As to quaternary structure, a double ring-shaped homohexamer of HslV is capped on each side by a ring-shaped HslU homohexamer. The assembly of the HslU/HslV complex is dependent on binding of ATP.

It is found in the cytoplasm. The enzyme catalyses ATP-dependent cleavage of peptide bonds with broad specificity.. Allosterically activated by HslU binding. Its function is as follows. Protease subunit of a proteasome-like degradation complex believed to be a general protein degrading machinery. This Cellvibrio japonicus (strain Ueda107) (Pseudomonas fluorescens subsp. cellulosa) protein is ATP-dependent protease subunit HslV.